A 254-amino-acid chain; its full sequence is 3-deoxy-manno-octulosonate cytidylyltransferase (254 aa).

It belongs to the KdsB family.

The protein resides in the cytoplasm. The catalysed reaction is 3-deoxy-alpha-D-manno-oct-2-ulosonate + CTP = CMP-3-deoxy-beta-D-manno-octulosonate + diphosphate. It functions in the pathway nucleotide-sugar biosynthesis; CMP-3-deoxy-D-manno-octulosonate biosynthesis; CMP-3-deoxy-D-manno-octulosonate from 3-deoxy-D-manno-octulosonate and CTP: step 1/1. It participates in bacterial outer membrane biogenesis; lipopolysaccharide biosynthesis. In terms of biological role, activates KDO (a required 8-carbon sugar) for incorporation into bacterial lipopolysaccharide in Gram-negative bacteria. The polypeptide is 3-deoxy-manno-octulosonate cytidylyltransferase (Nitrobacter winogradskyi (strain ATCC 25391 / DSM 10237 / CIP 104748 / NCIMB 11846 / Nb-255)).